The following is a 232-amino-acid chain: Protein TIFY 10c (232 aa).

Positions 54-73 (PPAAGAGGAFRPPPTTMNLL) are disordered. A Tify domain is found at 114-149 (AGEKAQQLTIFYGGKVVVFENFPSTKVKDLLQIVST). The disordered stretch occupies residues 151–176 (DGVDKNTGTAATQSLPRPAHNSLPDL). Positions 156–165 (NTGTAATQSL) are enriched in polar residues. The Jas signature appears at 177 to 202 (PIARRNSLHRFLEKRKGRMNANAPYQ). The Nuclear localization signal motif lies at 179-186 (ARRNSLHR).

This sequence belongs to the TIFY/JAZ family. Interacts with BHLH148. Interacts with COI1B in a coronatine-dependent manner. Coronatine is an analog of jasmonoyl isoleucine (JA-Ile). Interacts with TIFY5/JAZ2, TIFY6B/JAZ4, TIFY9/JAZ5, TIFY11A, TIFY11D/JAZ12 and TIFY11G/JAZ15. Post-translationally, ubiquitinated. Increase in jasmonoyl isoleucine (JA-Ile) levels mediates its degradation via COI1B-mediated proteasome pathway.

It localises to the nucleus. Its subcellular location is the cytoplasm. The protein localises to the cytosol. Functionally, repressor of jasmonate (JA) responses. Acts as a repressor of JA-induced resistance to the bacterial blight pathogen Xanthomonas oryzae pv. oryzae (Xoo). Regulates JA-induced accumulation of linalool at the transcriptional level of linalool synthase gene LIS. Linalool is important for resistance to bacterial blight pathogen Xoo. The protein is Protein TIFY 10c of Oryza sativa subsp. indica (Rice).